A 178-amino-acid polypeptide reads, in one-letter code: Crossover junction endodeoxyribonuclease RuvC (178 aa).

Catalysis depends on residues Asp-21, Glu-81, and His-154. Mg(2+) is bound by residues Asp-21, Glu-81, and His-154.

It belongs to the RuvC family. In terms of assembly, homodimer which binds Holliday junction (HJ) DNA. The HJ becomes 2-fold symmetrical on binding to RuvC with unstacked arms; it has a different conformation from HJ DNA in complex with RuvA. In the full resolvosome a probable DNA-RuvA(4)-RuvB(12)-RuvC(2) complex forms which resolves the HJ. Requires Mg(2+) as cofactor.

It is found in the cytoplasm. It carries out the reaction Endonucleolytic cleavage at a junction such as a reciprocal single-stranded crossover between two homologous DNA duplexes (Holliday junction).. The RuvA-RuvB-RuvC complex processes Holliday junction (HJ) DNA during genetic recombination and DNA repair. Endonuclease that resolves HJ intermediates. Cleaves cruciform DNA by making single-stranded nicks across the HJ at symmetrical positions within the homologous arms, yielding a 5'-phosphate and a 3'-hydroxyl group; requires a central core of homology in the junction. The consensus cleavage sequence is 5'-(A/T)TT(C/G)-3'. Cleavage occurs on the 3'-side of the TT dinucleotide at the point of strand exchange. HJ branch migration catalyzed by RuvA-RuvB allows RuvC to scan DNA until it finds its consensus sequence, where it cleaves and resolves the cruciform DNA. The polypeptide is Crossover junction endodeoxyribonuclease RuvC (Treponema denticola (strain ATCC 35405 / DSM 14222 / CIP 103919 / JCM 8153 / KCTC 15104)).